The primary structure comprises 504 residues: Probable cytochrome P450 513F1 (504 aa).

Residues 1–21 traverse the membrane as a helical segment; sequence MILSLLFLFVITLYFLIPSRI. Cys-449 provides a ligand contact to heme.

Belongs to the cytochrome P450 family. Requires heme as cofactor.

It is found in the membrane. This is Probable cytochrome P450 513F1 (cyp513F1) from Dictyostelium discoideum (Social amoeba).